Here is a 207-residue protein sequence, read N- to C-terminus: Recombination protein RecR (207 aa).

A C4-type zinc finger spans residues 62–77 (CSRCNTFTEQDVCETC). In terms of domain architecture, Toprim spans 85–184 (SVLCVVETPA…KVSRLARGVP (100 aa)).

It belongs to the RecR family.

May play a role in DNA repair. It seems to be involved in an RecBC-independent recombinational process of DNA repair. It may act with RecF and RecO. The protein is Recombination protein RecR of Ralstonia nicotianae (strain ATCC BAA-1114 / GMI1000) (Ralstonia solanacearum).